Here is a 411-residue protein sequence, read N- to C-terminus: Protein-lysine 6-oxidase (411 aa).

The N-terminal stretch at 1 to 21 is a signal peptide; the sequence is MRFAWTVLFLGQLQFCPLLRC. Residues 22–162 constitute a propeptide, removed by BMP1; sequence APQAPREPPA…PPSHVDRMVG (141 aa). Residues 60–168 are disordered; the sequence is PQRRRDSSAT…RMVGDDPYNP (109 aa). Asparagine 91 and asparagine 138 each carry an N-linked (GlcNAc...) asparagine glycan. Tyrosine 181 is subject to Sulfotyrosine. Positions 207–411 are lysyl-oxidase like; that stretch reads PDLVPDPYYI…YASGCTISPY (205 aa). 5 disulfides stabilise this stretch: cysteine 232/cysteine 238, cysteine 285/cysteine 334, cysteine 318/cysteine 324, cysteine 345/cysteine 355, and cysteine 392/cysteine 406. Cu cation is bound by residues histidine 286, histidine 288, and histidine 290. A cross-link (lysine tyrosylquinone (Lys-Tyr)) is located at residues 314 to 349; sequence KASFCLEDTSCDYGYHRRFACTAHTQGLSPGCYDTY. Tyrosine 349 bears the 2',4',5'-topaquinone mark.

This sequence belongs to the lysyl oxidase family. As to quaternary structure, interacts with MFAP4. Interacts (via propeptide) with EFEMP2; this interaction is strong and facilitates formation of ternary complexes with ELN during elastic fiber assembly; this interaction limits interaction of EFEMP2 with FBLN5. Cu cation serves as cofactor. It depends on lysine tyrosylquinone residue as a cofactor. Post-translationally, the lysine tyrosylquinone cross-link (LTQ) is generated by condensation of the epsilon-amino group of a lysine with a topaquinone produced by oxidation of tyrosine. Proteolytically cleaved by BMP1 which removes the propeptide. Also proteolytically cleaved by ADAMTS2 and ADAMTS14, but not by ADAMTS3, at an additional cleavage site downstream of the BMP1 cleavage site. The propeptide plays a role in directing the deposition of this enzyme to elastic fibers, via interaction with tropoelastin. Cleavage by BMP1 to remove the propeptide does not increase enzymatic activity but increases binding to collagen. Cleavage by ADAMTS2 produces a form with reduced collagen-binding activity. In terms of processing, sulfated at Tyr-181 and also at either Tyr-177 or Tyr-178 which enhances binding to collagen. Aorta and lung.

The protein localises to the secreted. It localises to the extracellular space. It catalyses the reaction L-lysyl-[protein] + O2 + H2O = (S)-2-amino-6-oxohexanoyl-[protein] + H2O2 + NH4(+). Responsible for the post-translational oxidative deamination of peptidyl lysine residues in precursors to fibrous collagen and elastin. Regulator of Ras expression. May play a role in tumor suppression. Plays a role in the aortic wall architecture. The sequence is that of Protein-lysine 6-oxidase from Rattus norvegicus (Rat).